The sequence spans 464 residues: ATP synthase subunit beta (464 aa).

154–161 is a binding site for ATP; that stretch reads GGAGVGKT.

Belongs to the ATPase alpha/beta chains family. As to quaternary structure, F-type ATPases have 2 components, CF(1) - the catalytic core - and CF(0) - the membrane proton channel. CF(1) has five subunits: alpha(3), beta(3), gamma(1), delta(1), epsilon(1). CF(0) has three main subunits: a(1), b(2) and c(9-12). The alpha and beta chains form an alternating ring which encloses part of the gamma chain. CF(1) is attached to CF(0) by a central stalk formed by the gamma and epsilon chains, while a peripheral stalk is formed by the delta and b chains.

It localises to the cell inner membrane. It carries out the reaction ATP + H2O + 4 H(+)(in) = ADP + phosphate + 5 H(+)(out). Functionally, produces ATP from ADP in the presence of a proton gradient across the membrane. The catalytic sites are hosted primarily by the beta subunits. The protein is ATP synthase subunit beta of Blochmanniella floridana.